Here is a 374-residue protein sequence, read N- to C-terminus: MINKKLLFLVFALAKGVLADEEDEYEEDYNMNPELENPGMFKHVDWRDFRLEFVILACFFLYVFSFITQKKKNQKIASRWYGSLQSSFRQQFAQYGPGPNSSPIIYDSPTEFSSYLTGRLNVKNVYTTLQLFPRQDLLAYSLNQIVEILLGNVMSSVLPVADRFQFDLTLADQNLKAERFVFAIVHKDCMRILREIRYDLSFTRISSSPYLPETHVLMSENNECSQAIFEIPEFMSSINECIENLEYFIVTDQPSVPPATEKDYVTKPRIEASIRIKKITSLSGLSNATGSALFNSLLLVADSCPKFQWRPEVSKKLTSARKLAFEQVVHASAAKAAKKKVKSSGDISKLSESDQKKRMERERQRKMRRRAKKM.

The chain crosses the membrane as a helical span at residues 49–68; it reads FRLEFVILACFFLYVFSFIT. The N-linked (GlcNAc...) asparagine glycan is linked to asparagine 287. The segment at 335 to 374 is disordered; that stretch reads KAAKKKVKSSGDISKLSESDQKKRMERERQRKMRRRAKKM. The segment covering 349-363 has biased composition (basic and acidic residues); sequence KLSESDQKKRMERER. Over residues 364–374 the composition is skewed to basic residues; the sequence is QRKMRRRAKKM.

Belongs to the UPF0674 family.

It localises to the endoplasmic reticulum membrane. This is UPF0674 endoplasmic reticulum membrane protein C2G5.01 from Schizosaccharomyces pombe (strain 972 / ATCC 24843) (Fission yeast).